The sequence spans 484 residues: tRNA-2-methylthio-N(6)-dimethylallyladenosine synthase (484 aa).

Positions glycine 36–glutamate 153 constitute an MTTase N-terminal domain. Cysteine 45, cysteine 82, cysteine 116, cysteine 190, cysteine 194, and cysteine 197 together coordinate [4Fe-4S] cluster. The Radical SAM core domain occupies arginine 176–serine 415. One can recognise a TRAM domain in the interval glutamine 416–leucine 479. Residues glutamate 428–phenylalanine 450 are disordered.

The protein belongs to the methylthiotransferase family. MiaB subfamily. In terms of assembly, monomer. The cofactor is [4Fe-4S] cluster.

The protein resides in the cytoplasm. The enzyme catalyses N(6)-dimethylallyladenosine(37) in tRNA + (sulfur carrier)-SH + AH2 + 2 S-adenosyl-L-methionine = 2-methylsulfanyl-N(6)-dimethylallyladenosine(37) in tRNA + (sulfur carrier)-H + 5'-deoxyadenosine + L-methionine + A + S-adenosyl-L-homocysteine + 2 H(+). Catalyzes the methylthiolation of N6-(dimethylallyl)adenosine (i(6)A), leading to the formation of 2-methylthio-N6-(dimethylallyl)adenosine (ms(2)i(6)A) at position 37 in tRNAs that read codons beginning with uridine. The protein is tRNA-2-methylthio-N(6)-dimethylallyladenosine synthase of Xanthomonas oryzae pv. oryzae (strain KACC10331 / KXO85).